The following is a 327-amino-acid chain: GMP reductase (327 aa).

Cys175 (thioimidate intermediate) is an active-site residue. 204-227 is an NADP(+) binding site; the sequence is IIADGGIRTHGDIAKSIRFGASMV.

This sequence belongs to the IMPDH/GMPR family. GuaC type 2 subfamily.

The catalysed reaction is IMP + NH4(+) + NADP(+) = GMP + NADPH + 2 H(+). Its function is as follows. Catalyzes the irreversible NADPH-dependent deamination of GMP to IMP. It functions in the conversion of nucleobase, nucleoside and nucleotide derivatives of G to A nucleotides, and in maintaining the intracellular balance of A and G nucleotides. The polypeptide is GMP reductase (Oceanobacillus iheyensis (strain DSM 14371 / CIP 107618 / JCM 11309 / KCTC 3954 / HTE831)).